Here is a 443-residue protein sequence, read N- to C-terminus: Phosphoglucosamine mutase (443 aa).

Residue serine 102 is the Phosphoserine intermediate of the active site. The Mg(2+) site is built by serine 102, aspartate 241, aspartate 243, and aspartate 245. Serine 102 carries the post-translational modification Phosphoserine.

The protein belongs to the phosphohexose mutase family. The cofactor is Mg(2+). In terms of processing, activated by phosphorylation.

The enzyme catalyses alpha-D-glucosamine 1-phosphate = D-glucosamine 6-phosphate. Catalyzes the conversion of glucosamine-6-phosphate to glucosamine-1-phosphate. The protein is Phosphoglucosamine mutase of Polaromonas naphthalenivorans (strain CJ2).